The sequence spans 354 residues: ATPase GET3 (354 aa).

26–33 (KGGVGKTT) is a binding site for ATP. Asp-57 is a catalytic residue. ATP-binding residues include Glu-245 and Asn-272. Positions 285 and 288 each coordinate Zn(2+).

It belongs to the arsA ATPase family. In terms of assembly, homodimer. Component of the Golgi to ER traffic (GET) complex, which is composed of GET1, GET2 and GET3. Within the complex, GET1 and GET2 form a heterotetramer which is stabilized by phosphatidylinositol binding and which binds to the GET3 homodimer. Interacts with the chloride channel protein GEF1.

Its subcellular location is the cytoplasm. It is found in the endoplasmic reticulum. The protein localises to the golgi apparatus. Functionally, ATPase required for the post-translational delivery of tail-anchored (TA) proteins to the endoplasmic reticulum. Recognizes and selectively binds the transmembrane domain of TA proteins in the cytosol. This complex then targets to the endoplasmic reticulum by membrane-bound receptors GET1 and GET2, where the tail-anchored protein is released for insertion. This process is regulated by ATP binding and hydrolysis. ATP binding drives the homodimer towards the closed dimer state, facilitating recognition of newly synthesized TA membrane proteins. ATP hydrolysis is required for insertion. Subsequently, the homodimer reverts towards the open dimer state, lowering its affinity for the GET1-GET2 receptor, and returning it to the cytosol to initiate a new round of targeting. Cooperates with the HDEL receptor ERD2 to mediate the ATP-dependent retrieval of resident ER proteins that contain a C-terminal H-D-E-L retention signal from the Golgi to the ER. Involved in low-level resistance to the oxyanions arsenite and arsenate, and in heat tolerance. The protein is ATPase GET3 of Saccharomyces cerevisiae (strain RM11-1a) (Baker's yeast).